A 1172-amino-acid polypeptide reads, in one-letter code: MPDMDIDVKDLEEFEATTGEINLSELGEGFLQSFCKKAATSFFDKYGLISHQLNSYNYFIEHGLQNVFQSFGEMLVEPSFDVVKKKDNDWRYATVKFGEVTVEKPTFFSDDKELEFLPWHARLQNMTYSARIKVNVQVEVFKNTVVKSDKFKTGQDNYVEKKILDVKKQDILIGSIPVMVKSILCKTSEKGKENCKKGDCAFDQGGYFVIKGAEKVFIAQEQMCTKRLWISNSPWTVSFRSENKRNRFIVRLSENEKAEDYKRREKVLTVYFLSTEIPVWLLFFALGVSSDKEAMDLIAFDGDDASITNSLIASIHVADAVCEAFRCGNNALTYVEQQIKSTKFPPAESVDECLHLYLFPGLQSLKKKARFLGYMVKCLLNSYAGKRKCENRDSFRNKRIELAGELLEREIRVHLAHARRKMTRAMQKHLSGDGDLKPIEHYLDASVITNGLSRAFSTGAWSHPFRKMERVSGVVANLGRANPLQTLIDLRRTRQQVLYTGKVGDARYPHPSHWGRVCFLSTPDGENCGLVKNMSLLGLVSTQSLESVVEKLFACGMEELMDDTCTPLFGKHKVLLNGDWVGLCADSESFVAELKSRRRQSELPREMEIKRDKDDNEVRIFTDAGRLLRPLLVVENLQKLKQEKPSQYPFDHLLDHGILELIGIEEEEDCNTAWGIKQLLKEPKIYTHCELDLSFLLGVSCAVVPFANHDHGRRVLYQSQKHCQQAIGFSSTNPNIRCDTLSQQLFYPQKPLFKTLASECLKKEVLFNGQNAIVAVNVHLGYNQEDSIVMNKASLERGMFRSEQIRSYKAEVDAKDSEKRKKMDELVQFGKTHSKIGKVDSLEDDGFPFIGANMSTGDIVIGRCTESGADHSIKLKHTERGIVQKVVLSSNDEGKNFAAVSLRQVRSPCLGDKFSSMHGQKGVLGYLEEQQNFPFTIQGIVPDIVINPHAFPSRQTPGQLLEAALSKGIACPIQKEGSSAAYTKLTRHATPFSTPGVTEITEQLHRAGFSRWGNERVYNGRSGEMMRSMIFMGPTFYQRLVHMSEDKVKFRNTGPVHPLTRQPVADRKRFGGIKFGEMERDCLIAHGASANLHERLFTLSDSSQMHICRKCKTYANVIERTPSSGRKIRGPYCRVCVSSDHVVRVYVPYGAKLLCQELFSMGITLNFDTKLC.

Aspartate 786 is a Mg(2+) binding site. Residues cysteine 1108, cysteine 1111, cysteine 1133, and cysteine 1136 each coordinate Zn(2+). The segment at 1108–1136 (CRKCKTYANVIERTPSSGRKIRGPYCRVC) adopts a C4-type zinc-finger fold.

This sequence belongs to the RNA polymerase beta chain family. Component of the RNA polymerase IV and V complexes. Interacts with SSH1, NRPD1 and NRPE1. As to expression, mostly expressed in seedlings, flowers and roots, present ubiquitously, except in sperm cells.

The protein localises to the nucleus. The catalysed reaction is RNA(n) + a ribonucleoside 5'-triphosphate = RNA(n+1) + diphosphate. Its function is as follows. DNA-dependent RNA polymerase catalyzes the transcription of DNA into RNA using the four ribonucleoside triphosphates as substrates. Second largest component of RNA polymerases IV and V which mediate short-interfering RNAs (siRNA) accumulation and subsequent RNA-directed DNA methylation-dependent (RdDM) transcriptional gene silencing (TGS) of endogenous repeated sequences, including transposable elements. Proposed to contribute to the polymerase catalytic activity and forms the polymerase active center together with the largest subunit. Also required for full erasure of methylation when the RNA trigger is withdrawn. Required for intercellular RNA interference (RNAi) leading to systemic post-transcriptional gene silencing. Involved in the maintenance of post-transcriptional RNA silencing. During interphase, mediates siRNA-independent heterochromatin association and methylation into chromocenters and condensation and cytosine methylation at pericentromeric major repeats. Required for complete maintenance of the 35S promoter homology-dependent TGS in transgenic plants and for the initial establishment of DNA methylation. This Arabidopsis thaliana (Mouse-ear cress) protein is DNA-directed RNA polymerases IV and V subunit 2 (NRPD2).